Reading from the N-terminus, the 255-residue chain is Myogenic factor 5 (255 aa).

The bHLH domain maps to 83–134 (DRRKAATMRERRRLKKVNQAFETLKRCTTTNPNQRLPKVEILRNAIRYIESL). The disordered stretch occupies residues 226-249 (DTASLSPATSANSQPATPGPSSSR).

As to quaternary structure, efficient DNA binding requires dimerization with another bHLH protein.

It is found in the nucleus. Acts as a transcriptional activator that promotes transcription of muscle-specific target genes and plays a role in muscle differentiation. Together with MYOG and MYOD1, co-occupies muscle-specific gene promoter core region during myogenesis. Induces fibroblasts to differentiate into myoblasts. Probable sequence specific DNA-binding protein. The sequence is that of Myogenic factor 5 (Myf5) from Mus musculus (Mouse).